A 276-amino-acid chain; its full sequence is Halorhodopsin (276 aa).

Residues 1-21 (MTAASTTATTMLQATQSDVLQ) constitute a propeptide that is removed on maturation. The Extracellular portion of the chain corresponds to 22 to 25 (EIQS). A helical membrane pass occupies residues 26–51 (NFLLNSSIWVNIALAGVVILLFVAMG). Residues 52–57 (RDIESP) lie on the Cytoplasmic side of the membrane. A helical transmembrane segment spans residues 58-81 (RAKLIWVATMLVPLVSISSYAGLA). The Extracellular segment spans residues 82 to 105 (SGLTVGFLQMPPGHALAGQEVLSP). The chain crosses the membrane as a helical span at residues 106-127 (WGRYLTWTFSTPMILLALGLLA). The Cytoplasmic segment spans residues 128-130 (DTD). Residues 131–154 (IASLFTAITMDIGMCVTGLAAALI) traverse the membrane as a helical segment. Residues 155 to 157 (TSS) are Extracellular-facing. A helical transmembrane segment spans residues 158–180 (HLLRWVFYGISCAFFVAVLYVLL). Over 181–192 (VQWPADAEAAGT) the chain is Cytoplasmic. Residues 193–216 (SEIFGTLKILTVVLWLGYPILWAL) form a helical membrane-spanning segment. The Extracellular segment spans residues 217–225 (GSEGVALLS). A helical transmembrane segment spans residues 226–254 (VGVTSWGYSGLDILAKYVFAFLLLRWVAA). Lys-241 carries the N6-(retinylidene)lysine modification. Residues 255–276 (NEGAVSGSGMSIGSGGAAPADD) are Cytoplasmic-facing.

It belongs to the archaeal/bacterial/fungal opsin family.

Its subcellular location is the cell membrane. Light-driven chloride pump. The sequence is that of Halorhodopsin (hop) from Halobacterium halobium (strain port).